The sequence spans 304 residues: UDP-N-acetylenolpyruvoylglucosamine reductase (304 aa).

Positions 31–196 (KVGGPADYLA…ISAKFNLKPG (166 aa)) constitute an FAD-binding PCMH-type domain. Residue Arg-175 is part of the active site. The active-site Proton donor is the Ser-225. Residue Glu-295 is part of the active site.

It belongs to the MurB family. FAD is required as a cofactor.

It is found in the cytoplasm. It carries out the reaction UDP-N-acetyl-alpha-D-muramate + NADP(+) = UDP-N-acetyl-3-O-(1-carboxyvinyl)-alpha-D-glucosamine + NADPH + H(+). It functions in the pathway cell wall biogenesis; peptidoglycan biosynthesis. Cell wall formation. The sequence is that of UDP-N-acetylenolpyruvoylglucosamine reductase from Streptococcus thermophilus (strain CNRZ 1066).